The chain runs to 230 residues: Ureidoacrylate amidohydrolase RutB (230 aa).

Catalysis depends on aspartate 24, which acts as the Proton acceptor. Lysine 133 is an active-site residue. The Nucleophile role is filled by cysteine 166.

This sequence belongs to the isochorismatase family. RutB subfamily.

It catalyses the reaction (Z)-3-ureidoacrylate + H2O + H(+) = (Z)-3-aminoacrylate + NH4(+) + CO2. The catalysed reaction is (Z)-3-ureidoacrylate + H2O = (Z)-3-aminoacrylate + carbamate + H(+). It carries out the reaction (Z)-2-methylureidoacrylate + H2O + H(+) = (Z)-2-methylaminoacrylate + NH4(+) + CO2. In terms of biological role, hydrolyzes ureidoacrylate to form aminoacrylate and carbamate. The carbamate hydrolyzes spontaneously, thereby releasing one of the nitrogen atoms of the pyrimidine ring as ammonia and one of its carbon atoms as CO2. The sequence is that of Ureidoacrylate amidohydrolase RutB from Escherichia coli (strain K12 / MC4100 / BW2952).